Reading from the N-terminus, the 531-residue chain is Maturase K (531 aa).

The protein belongs to the intron maturase 2 family. MatK subfamily.

The protein resides in the plastid. It localises to the chloroplast. In terms of biological role, usually encoded in the trnK tRNA gene intron. Probably assists in splicing its own and other chloroplast group II introns. This is Maturase K from Ephedra sinica (Chinese ephedra).